Consider the following 438-residue polypeptide: Transmembrane protein 184C (438 aa).

The next 7 helical transmembrane spans lie at 17-37 (LAVV…VWEL), 48-68 (AWFI…WVIL), 86-106 (ILWM…YPSI), 176-196 (VLQY…CELL), 212-232 (YLVI…LLFY), 254-274 (VVFV…VGVI), and 287-307 (AVAT…AAIA). Residues 358 to 438 (PRKKFFPEDQ…EEPSEKPVAS (81 aa)) are disordered. Composition is skewed to low complexity over residues 374–390 (SLLS…ASSV) and 404–413 (TVTPQTTPTT). Positions 426-438 (GVREEPSEKPVAS) are enriched in basic and acidic residues.

This sequence belongs to the TMEM184 family.

The protein localises to the membrane. In terms of biological role, possible tumor suppressor which may play a role in cell growth. This is Transmembrane protein 184C (TMEM184C) from Bos taurus (Bovine).